Reading from the N-terminus, the 653-residue chain is MSRALLELNGVTRRFVAGEKDFIALNDINLTINAGELVAITGASGSGKSTLMNVLGCLDHPNSGSYKVDGRETGTLTDDELAELRRDHFGFIFQRYHLLPHLAAIQNVEMPAIYAGTGKGMRVERAQKLLERLGLSGHLEHRPSQLSGGQQQRVSIARALMNGGEIILADEPTGALDSVSGKEVMNILLELNSAGHTVILVTHDEKVAAHAERIIEMRDGEIIADRVNTDRPIINEKTTERLPTKPRQGNRLMANIGLFQEAFVMAWVALISHRMRTLLTMLGIIIGITSVVSIVAIGEGAKRYVLKDIQAIGSNTIEVFPGSDFGDTKSMDIQTLALSDVAALSSEYYIDSATPNIGRNLLVRYRNIDVSATVSGVSPSYFQVRGTKMGLGVGFNKDDARRQAQVVVIDHNTRIRLFGPKVDPLGQVILVGNLPCTVIGVTENKKNIFDTSKNLNIWMPYETASGRLLGQTYLDGITVRVKDGQPSKVVEDNVNKLLQKRHGTKDFFTYNLDSVMQTVQKTSQSLALLLSLIAVISLAVGGIGVMNIMLVSVTERTREIGIRMAVGARQSDIRQQFLVEAVMVCLIGGVIGISLSFVIGYVFSLLVKEWQMVFSLGSIVTAFICSTLIGIVFGFVPARNAAQLDPIEALARD.

An ABC transporter domain is found at 6-244 (LELNGVTRRF…NEKTTERLPT (239 aa)). 42-49 (GASGSGKS) contributes to the ATP binding site. 5 consecutive transmembrane segments (helical) span residues 252-272 (LMAN…ALIS), 278-298 (LLTM…VAIG), 526-546 (LALL…IGVM), 583-603 (MVCL…GYVF), and 616-636 (LGSI…FGFV).

This sequence belongs to the ABC transporter superfamily. Macrolide exporter (TC 3.A.1.122) family. Probably part of a tripartite efflux system, which is composed of an inner membrane transporter, a periplasmic membrane fusion protein, and an outer membrane component.

It is found in the cell inner membrane. Probably involved in the export of syringafactins. This Pseudomonas syringae pv. syringae (strain B728a) protein is Probable syringafactin export ATP-binding/permease protein SyfD.